Consider the following 152-residue polypeptide: Ribosome maturation factor RimP (152 aa).

It belongs to the RimP family.

It is found in the cytoplasm. Its function is as follows. Required for maturation of 30S ribosomal subunits. This Elusimicrobium minutum (strain Pei191) protein is Ribosome maturation factor RimP.